The sequence spans 837 residues: PE-PGRS family protein PE_PGRS4 (837 aa).

A PE domain is found at 4-94; it reads VIAAPEVIAA…GAYAAAEAAA (91 aa). Over residues 811–825 the composition is skewed to gly residues; sequence NGGKAGGTPGAGGTS. The interval 811 to 837 is disordered; sequence NGGKAGGTPGAGGTSGLIIGENGLNGL. A compositionally biased stretch (low complexity) spans 826–837; that stretch reads GLIIGENGLNGL.

It belongs to the mycobacterial PE family. PGRS subfamily.

The sequence is that of PE-PGRS family protein PE_PGRS4 from Mycobacterium tuberculosis (strain ATCC 25618 / H37Rv).